The sequence spans 913 residues: DNA mismatch repair protein MutS (913 aa).

720–727 (GPNASGKS) lines the ATP pocket.

The protein belongs to the DNA mismatch repair MutS family.

This protein is involved in the repair of mismatches in DNA. It is possible that it carries out the mismatch recognition step. This protein has a weak ATPase activity. This Prochlorococcus marinus (strain MIT 9312) protein is DNA mismatch repair protein MutS.